A 276-amino-acid chain; its full sequence is Ribonuclease T2 (276 aa).

Residues 1–17 (MGMLALGAMQLAAGAVF) form the signal peptide. 5 disulfides stabilise this stretch: C22–C41, C30–C77, C40–C143, C85–C135, and C208–C242. An N-linked (GlcNAc...) asparagine glycan is attached at N32. H70 is a catalytic residue. N-linked (GlcNAc...) asparagine glycosylation is present at N93. Catalysis depends on residues E128 and H132. N-linked (GlcNAc...) asparagine glycosylation occurs at N256.

This sequence belongs to the RNase T2 family.

It carries out the reaction a ribonucleotidyl-ribonucleotide-RNA + H2O = a 3'-end 3'-phospho-ribonucleotide-RNA + a 5'-end dephospho-ribonucleoside-RNA + H(+). This chain is Ribonuclease T2 (rntB), found in Aspergillus oryzae (strain ATCC 42149 / RIB 40) (Yellow koji mold).